A 69-amino-acid polypeptide reads, in one-letter code: UPF0248 protein AF_0420 (69 aa).

The protein belongs to the UPF0248 family.

The sequence is that of UPF0248 protein AF_0420 from Archaeoglobus fulgidus (strain ATCC 49558 / DSM 4304 / JCM 9628 / NBRC 100126 / VC-16).